We begin with the raw amino-acid sequence, 1413 residues long: DNA-directed RNA polymerase subunit beta' (1413 aa).

Positions 70, 72, 85, and 88 each coordinate Zn(2+). Residues Asp460, Asp462, and Asp464 each coordinate Mg(2+). Zn(2+) contacts are provided by Cys819, Cys893, Cys900, and Cys903.

This sequence belongs to the RNA polymerase beta' chain family. In terms of assembly, the RNAP catalytic core consists of 2 alpha, 1 beta, 1 beta' and 1 omega subunit. When a sigma factor is associated with the core the holoenzyme is formed, which can initiate transcription. Mg(2+) is required as a cofactor. The cofactor is Zn(2+).

The catalysed reaction is RNA(n) + a ribonucleoside 5'-triphosphate = RNA(n+1) + diphosphate. DNA-dependent RNA polymerase catalyzes the transcription of DNA into RNA using the four ribonucleoside triphosphates as substrates. This Burkholderia multivorans (strain ATCC 17616 / 249) protein is DNA-directed RNA polymerase subunit beta'.